The chain runs to 388 residues: Chorismate synthase (388 aa).

NADP(+) contacts are provided by R39 and R45. FMN-binding positions include 132-134 (RSS), 251-252 (NA), G296, 311-315 (KPIPT), and R337.

This sequence belongs to the chorismate synthase family. In terms of assembly, homotetramer. FMNH2 serves as cofactor.

It catalyses the reaction 5-O-(1-carboxyvinyl)-3-phosphoshikimate = chorismate + phosphate. The protein operates within metabolic intermediate biosynthesis; chorismate biosynthesis; chorismate from D-erythrose 4-phosphate and phosphoenolpyruvate: step 7/7. Functionally, catalyzes the anti-1,4-elimination of the C-3 phosphate and the C-6 proR hydrogen from 5-enolpyruvylshikimate-3-phosphate (EPSP) to yield chorismate, which is the branch point compound that serves as the starting substrate for the three terminal pathways of aromatic amino acid biosynthesis. This reaction introduces a second double bond into the aromatic ring system. This Staphylococcus epidermidis (strain ATCC 35984 / DSM 28319 / BCRC 17069 / CCUG 31568 / BM 3577 / RP62A) protein is Chorismate synthase.